A 105-amino-acid polypeptide reads, in one-letter code: Multidrug resistance protein EbrA (105 aa).

The next 4 helical transmembrane spans lie at 2-22 (LIGYIFLTIAICSESIGAAML), 35-55 (ALVVIGYSLAFYMLSLTLNHI), 57-77 (LSLSYATWSGAGTVLTTVIGV), and 84-104 (LNAKGLIGILLLLSGVVLLNW).

It belongs to the drug/metabolite transporter (DMT) superfamily. Small multidrug resistance (SMR) (TC 2.A.7.1) family. EbrA/EbrB subfamily. The efflux pump is composed of EbrA and EbrB.

It localises to the cell membrane. In terms of biological role, part of a multidrug efflux pump. Confers resistance to cationic lipophilic dyes such as ethidium bromide, acriflavine, pyronine Y and safranin O. The efflux is probably coupled to an influx of protons. The chain is Multidrug resistance protein EbrA (ebrA) from Bacillus subtilis (strain 168).